The sequence spans 406 residues: Argininosuccinate synthase (406 aa).

Residues 13–21 and A40 contribute to the ATP site; that span reads AYSGGLDTS. Residues Y91 and S96 each contribute to the L-citrulline site. Position 121 (G121) interacts with ATP. T123, N127, and D128 together coordinate L-aspartate. N127 is a binding site for L-citrulline. The L-citrulline site is built by R131, S182, S191, E267, and Y279.

Belongs to the argininosuccinate synthase family. Type 1 subfamily. In terms of assembly, homotetramer.

It is found in the cytoplasm. The catalysed reaction is L-citrulline + L-aspartate + ATP = 2-(N(omega)-L-arginino)succinate + AMP + diphosphate + H(+). The protein operates within amino-acid biosynthesis; L-arginine biosynthesis; L-arginine from L-ornithine and carbamoyl phosphate: step 2/3. The polypeptide is Argininosuccinate synthase (Brucella suis biovar 1 (strain 1330)).